We begin with the raw amino-acid sequence, 333 residues long: Sphingomyelinase C (333 aa).

The signal sequence occupies residues methionine 1–glutamine 26. A disulfide bond links cysteine 150 and cysteine 186.

This sequence belongs to the neutral sphingomyelinase family. Mg(2+) serves as cofactor. In terms of processing, the N-terminus is blocked.

It localises to the secreted. It carries out the reaction a sphingomyelin + H2O = phosphocholine + an N-acylsphing-4-enine + H(+). Activated by cobalt and manganese ions. Its function is as follows. Required, with sphingomyelinase, to effect target cell lysis (hemolysis). In Bacillus cereus, this protein is Sphingomyelinase C (cerB).